The primary structure comprises 359 residues: 3-dehydroquinate synthase (359 aa).

NAD(+)-binding positions include Asp-71 to Lys-76, Gly-105 to Asp-109, Thr-129 to Thr-130, Lys-142, and Lys-151. Zn(2+) contacts are provided by Glu-184, His-247, and His-264.

Belongs to the sugar phosphate cyclases superfamily. Dehydroquinate synthase family. Co(2+) is required as a cofactor. It depends on Zn(2+) as a cofactor. The cofactor is NAD(+).

The protein localises to the cytoplasm. The enzyme catalyses 7-phospho-2-dehydro-3-deoxy-D-arabino-heptonate = 3-dehydroquinate + phosphate. It functions in the pathway metabolic intermediate biosynthesis; chorismate biosynthesis; chorismate from D-erythrose 4-phosphate and phosphoenolpyruvate: step 2/7. In terms of biological role, catalyzes the conversion of 3-deoxy-D-arabino-heptulosonate 7-phosphate (DAHP) to dehydroquinate (DHQ). This is 3-dehydroquinate synthase from Burkholderia cenocepacia (strain HI2424).